A 101-amino-acid polypeptide reads, in one-letter code: Small ribosomal subunit protein uS14 (101 aa).

Belongs to the universal ribosomal protein uS14 family. In terms of assembly, part of the 30S ribosomal subunit. Contacts proteins S3 and S10.

In terms of biological role, binds 16S rRNA, required for the assembly of 30S particles and may also be responsible for determining the conformation of the 16S rRNA at the A site. The polypeptide is Small ribosomal subunit protein uS14 (Salmonella paratyphi A (strain ATCC 9150 / SARB42)).